A 97-amino-acid polypeptide reads, in one-letter code: YcgL domain-containing protein CKO_01183 (97 aa).

The YcgL domain occupies 1–85 (MFCVIYRSSK…PPEDLLKQHL (85 aa)). The tract at residues 74–97 (PPPPEDLLKQHLSAPGENKPDAKS) is disordered.

The protein is YcgL domain-containing protein CKO_01183 of Citrobacter koseri (strain ATCC BAA-895 / CDC 4225-83 / SGSC4696).